The chain runs to 330 residues: GMP reductase (330 aa).

Residue Cys-180 is the Thioimidate intermediate of the active site. 209-232 is a binding site for NADP(+); that stretch reads LIADGGIRHNGDIAKSVRFGASMV.

Belongs to the IMPDH/GMPR family. GuaC type 2 subfamily.

It carries out the reaction IMP + NH4(+) + NADP(+) = GMP + NADPH + 2 H(+). In terms of biological role, catalyzes the irreversible NADPH-dependent deamination of GMP to IMP. It functions in the conversion of nucleobase, nucleoside and nucleotide derivatives of G to A nucleotides, and in maintaining the intracellular balance of A and G nucleotides. The sequence is that of GMP reductase from Lactobacillus delbrueckii subsp. bulgaricus (strain ATCC 11842 / DSM 20081 / BCRC 10696 / JCM 1002 / NBRC 13953 / NCIMB 11778 / NCTC 12712 / WDCM 00102 / Lb 14).